The chain runs to 688 residues: GTPase IMAP family member 8 (688 aa).

Positions 22-44 (TSIGQGERPRASRGQESNFKQSQ) are disordered. Positions 35–44 (GQESNFKQSQ) are enriched in polar residues. AIG1-type G domains follow at residues 46–246 (TSTL…TENS), 281–471 (TPEL…VIRE), and 472–681 (KELL…SAVG). The segment at 55–62 (GKQGAGKS) is G1. GTP-binding positions include 55–63 (GKQGAGKSA) and serine 76. Positions 82-86 (MVTKR) are G2. A G3 region spans residues 103-106 (DTPD). The tract at residues 171–174 (TRED) is G4. GTP contacts are provided by residues 172 to 174 (RED) and asparagine 208. Residues 207 to 209 (NNK) form a G5 region.

The protein belongs to the TRAFAC class TrmE-Era-EngA-EngB-Septin-like GTPase superfamily. AIG1/Toc34/Toc159-like paraseptin GTPase family. IAN subfamily. In terms of tissue distribution, spleen, thymus and T-cells. Greatly reduced in T-cells from lymphopenic rats.

The protein localises to the endoplasmic reticulum. Its subcellular location is the golgi apparatus. It localises to the mitochondrion. It is found in the cytoplasm. The protein resides in the cytosol. Its function is as follows. Exerts an anti-apoptotic effect in the immune system and is involved in responses to infections. In Rattus norvegicus (Rat), this protein is GTPase IMAP family member 8 (Gimap8).